A 59-amino-acid polypeptide reads, in one-letter code: Large ribosomal subunit protein bL32 (59 aa).

A compositionally biased stretch (basic residues) spans 1 to 22; the sequence is MAVPKKKTSNSKRDSRRAHWNR. The segment at 1-59 is disordered; sequence MAVPKKKTSNSKRDSRRAHWNRKANLAAQRALSTGKSILTGRAKGFEYPTKDDDEDDDE.

The protein belongs to the bacterial ribosomal protein bL32 family.

This Acaryochloris marina (strain MBIC 11017) protein is Large ribosomal subunit protein bL32.